A 155-amino-acid polypeptide reads, in one-letter code: DNA gyrase inhibitor (155 aa).

It belongs to the DNA gyrase inhibitor family. In terms of assembly, interacts with DNA gyrase.

It is found in the cytoplasm. Inhibits the supercoiling activity of DNA gyrase. Acts by inhibiting DNA gyrase at an early step, prior to (or at the step of) binding of DNA by the gyrase. It protects cells against toxins that target DNA gyrase, by inhibiting activity of these toxins and reducing the formation of lethal double-strand breaks in the cell. This is DNA gyrase inhibitor from Edwardsiella piscicida.